Consider the following 660-residue polypeptide: DNA mismatch repair protein MutL (660 aa).

A disordered region spans residues 414–433; the sequence is SSVKHASRPQNTFTETDHPN.

Belongs to the DNA mismatch repair MutL/HexB family.

In terms of biological role, this protein is involved in the repair of mismatches in DNA. It is required for dam-dependent methyl-directed DNA mismatch repair. May act as a 'molecular matchmaker', a protein that promotes the formation of a stable complex between two or more DNA-binding proteins in an ATP-dependent manner without itself being part of a final effector complex. The chain is DNA mismatch repair protein MutL from Streptococcus pyogenes serotype M5 (strain Manfredo).